A 481-amino-acid chain; its full sequence is Two-component response regulator ORR32 (481 aa).

The Response regulatory domain occupies H13–W138. Residue D66 is modified to 4-aspartylphosphate.

Belongs to the ARR family. Type-B subfamily. Two-component system major event consists of a His-to-Asp phosphorelay between a sensor histidine kinase (HK) and a response regulator (RR). In plants, the His-to-Asp phosphorelay involves an additional intermediate named Histidine-containing phosphotransfer protein (HPt). This multistep phosphorelay consists of a His-Asp-His-Asp sequential transfer of a phosphate group between first a His and an Asp of the HK protein, followed by the transfer to a conserved His of the HPt protein and finally the transfer to an Asp in the receiver domain of the RR protein.

In terms of biological role, functions as a response regulator involved in His-to-Asp phosphorelay signal transduction system. Phosphorylation of the Asp residue in the receiver domain activates the ability of the protein to promote the transcription of target genes. May directly activate some type-A response regulators in response to cytokinins. The sequence is that of Two-component response regulator ORR32 from Oryza sativa subsp. japonica (Rice).